The sequence spans 203 residues: Holliday junction branch migration complex subunit RuvA (203 aa).

The segment at 1 to 63 is domain I; sequence MIGQLSGKVD…EEHIHLYGFL (63 aa). Residues 64 to 142 are domain II; the sequence is NLEEKIFFNL…KISSGSAIIK (79 aa). Positions 143–149 are flexible linker; that stretch reads ESLNIKH. Positions 150 to 203 are domain III; sequence ITPVASNEVIKALVNLGFSRFEAQNAVQGIITQNPEISIDELIKTALKNRNSNF.

It belongs to the RuvA family. As to quaternary structure, homotetramer. Forms an RuvA(8)-RuvB(12)-Holliday junction (HJ) complex. HJ DNA is sandwiched between 2 RuvA tetramers; dsDNA enters through RuvA and exits via RuvB. An RuvB hexamer assembles on each DNA strand where it exits the tetramer. Each RuvB hexamer is contacted by two RuvA subunits (via domain III) on 2 adjacent RuvB subunits; this complex drives branch migration. In the full resolvosome a probable DNA-RuvA(4)-RuvB(12)-RuvC(2) complex forms which resolves the HJ.

It is found in the cytoplasm. In terms of biological role, the RuvA-RuvB-RuvC complex processes Holliday junction (HJ) DNA during genetic recombination and DNA repair, while the RuvA-RuvB complex plays an important role in the rescue of blocked DNA replication forks via replication fork reversal (RFR). RuvA specifically binds to HJ cruciform DNA, conferring on it an open structure. The RuvB hexamer acts as an ATP-dependent pump, pulling dsDNA into and through the RuvAB complex. HJ branch migration allows RuvC to scan DNA until it finds its consensus sequence, where it cleaves and resolves the cruciform DNA. In Rickettsia africae (strain ESF-5), this protein is Holliday junction branch migration complex subunit RuvA.